The following is a 148-amino-acid chain: Large ribosomal subunit protein bL9 (148 aa).

The protein belongs to the bacterial ribosomal protein bL9 family.

Binds to the 23S rRNA. In Methylococcus capsulatus (strain ATCC 33009 / NCIMB 11132 / Bath), this protein is Large ribosomal subunit protein bL9.